Reading from the N-terminus, the 206-residue chain is Uridine kinase (206 aa).

An ATP-binding site is contributed by 11-18 (GGTGSGKS).

The protein belongs to the uridine kinase family.

It localises to the cytoplasm. The catalysed reaction is uridine + ATP = UMP + ADP + H(+). The enzyme catalyses cytidine + ATP = CMP + ADP + H(+). The protein operates within pyrimidine metabolism; CTP biosynthesis via salvage pathway; CTP from cytidine: step 1/3. Its pathway is pyrimidine metabolism; UMP biosynthesis via salvage pathway; UMP from uridine: step 1/1. In Clostridium botulinum (strain Kyoto / Type A2), this protein is Uridine kinase.